The chain runs to 288 residues: uncharacterized protein (288 aa).

Residues 1 to 59 (MDKLNAISIFCKVIETQSFTLAAKQQNISVAMASKLVSQLEEHLKTRLLQRTTRKIMPT) enclose the HTH lysR-type domain. Residues 19–38 (FTLAAKQQNISVAMASKLVS) constitute a DNA-binding region (H-T-H motif).

This sequence belongs to the LysR transcriptional regulatory family.

This is an uncharacterized protein from Haemophilus influenzae (strain ATCC 51907 / DSM 11121 / KW20 / Rd).